The primary structure comprises 152 residues: D-aminoacyl-tRNA deacylase (152 aa).

The Gly-cisPro motif, important for rejection of L-amino acids signature appears at 142-143 (GP).

The protein belongs to the DTD family. As to quaternary structure, homodimer.

The protein localises to the cytoplasm. It carries out the reaction glycyl-tRNA(Ala) + H2O = tRNA(Ala) + glycine + H(+). The catalysed reaction is a D-aminoacyl-tRNA + H2O = a tRNA + a D-alpha-amino acid + H(+). An aminoacyl-tRNA editing enzyme that deacylates mischarged D-aminoacyl-tRNAs. Also deacylates mischarged glycyl-tRNA(Ala), protecting cells against glycine mischarging by AlaRS. Acts via tRNA-based rather than protein-based catalysis; rejects L-amino acids rather than detecting D-amino acids in the active site. By recycling D-aminoacyl-tRNA to D-amino acids and free tRNA molecules, this enzyme counteracts the toxicity associated with the formation of D-aminoacyl-tRNA entities in vivo and helps enforce protein L-homochirality. The polypeptide is D-aminoacyl-tRNA deacylase (Burkholderia multivorans (strain ATCC 17616 / 249)).